A 445-amino-acid polypeptide reads, in one-letter code: Argininosuccinate lyase (445 aa).

Belongs to the lyase 1 family. Argininosuccinate lyase subfamily.

It localises to the cytoplasm. It carries out the reaction 2-(N(omega)-L-arginino)succinate = fumarate + L-arginine. Its pathway is amino-acid biosynthesis; L-arginine biosynthesis; L-arginine from L-ornithine and carbamoyl phosphate: step 3/3. The protein is Argininosuccinate lyase of Xylella fastidiosa (strain 9a5c).